A 902-amino-acid polypeptide reads, in one-letter code: Respiratory nitrate reductase alpha chain (902 aa).

The [4Fe-4S] cluster site is built by histidine 29, cysteine 33, and cysteine 37.

This sequence belongs to the prokaryotic molybdopterin-containing oxidoreductase family. In terms of assembly, heterotrimer composed of an alpha, a beta and a gamma chain. Alpha and beta are catalytic chains; gamma chains are involved in binding the enzyme complex to the cytoplasmic membrane. The cofactor is [4Fe-4S] cluster. It depends on Mo-bis(molybdopterin guanine dinucleotide) as a cofactor.

It is found in the cell membrane. It localises to the cytoplasm. The enzyme catalyses nitrate + a quinol = a quinone + nitrite + H2O. With respect to regulation, inhibited by micromolar concentrations of azide. In terms of biological role, the nitrate reductase enzyme complex allows Bradyrhizobium sp. USDA 3045 to use nitrate as an electron acceptor during anaerobic growth. The alpha chain is the actual site of nitrate reduction. The protein is Respiratory nitrate reductase alpha chain (narG) of Bradyrhizobium sp.